Consider the following 523-residue polypeptide: Cyclin-dependent kinase 17 (523 aa).

Ser-9 is modified (phosphoserine). The interval Ile-31 to His-55 is disordered. A phosphoserine mark is found at Ser-80, Ser-92, and Ser-105. Residues Met-103–Pro-123 are disordered. Over residues Asp-110–Pro-123 the composition is skewed to polar residues. Phosphoserine is present on residues Ser-137, Ser-146, Ser-165, and Ser-180. Residues Tyr-192–Phe-473 form the Protein kinase domain. ATP is bound by residues Leu-198–Val-206 and Lys-221. Asp-313 (proton acceptor) is an active-site residue.

This sequence belongs to the protein kinase superfamily. CMGC Ser/Thr protein kinase family. CDC2/CDKX subfamily. In terms of assembly, found in a complex containing CABLES1, CDK16 and TDRD7. Interacts with TDRD7. In terms of tissue distribution, brain specific. Within the brain it is concentrated in the neuronal layers of the hippocampus and olfactory bulb, which mostly consist of post-mitotic neurons.

It catalyses the reaction L-seryl-[protein] + ATP = O-phospho-L-seryl-[protein] + ADP + H(+). The enzyme catalyses L-threonyl-[protein] + ATP = O-phospho-L-threonyl-[protein] + ADP + H(+). In terms of biological role, may play a role in terminally differentiated neurons. Has a Ser/Thr-phosphorylating activity for histone H1. The protein is Cyclin-dependent kinase 17 (Cdk17) of Rattus norvegicus (Rat).